The following is a 176-amino-acid chain: Ribosome rescue factor SmrB (176 aa).

The Smr domain maps to 97–172; the sequence is LDMHGMTQQE…GDGALLVLLS (76 aa).

Belongs to the SmrB family. As to quaternary structure, associates with collided ribosomes, but not with correctly translating polysomes.

Acts as a ribosome collision sensor. Detects stalled/collided disomes (pairs of ribosomes where the leading ribosome is stalled and a second ribosome has collided with it) and endonucleolytically cleaves mRNA at the 5' boundary of the stalled ribosome. Stalled/collided disomes form a new interface (primarily via the 30S subunits) that binds SmrB. Cleaved mRNA becomes available for tmRNA ligation, leading to ribosomal subunit dissociation and rescue of stalled ribosomes. The protein is Ribosome rescue factor SmrB of Vibrio vulnificus (strain YJ016).